Here is a 241-residue protein sequence, read N- to C-terminus: 1-(5-phosphoribosyl)-5-[(5-phosphoribosylamino)methylideneamino] imidazole-4-carboxamide isomerase (241 aa).

The active-site Proton acceptor is the Asp-8. Asp-130 functions as the Proton donor in the catalytic mechanism.

The protein belongs to the HisA/HisF family.

It is found in the cytoplasm. The catalysed reaction is 1-(5-phospho-beta-D-ribosyl)-5-[(5-phospho-beta-D-ribosylamino)methylideneamino]imidazole-4-carboxamide = 5-[(5-phospho-1-deoxy-D-ribulos-1-ylimino)methylamino]-1-(5-phospho-beta-D-ribosyl)imidazole-4-carboxamide. The protein operates within amino-acid biosynthesis; L-histidine biosynthesis; L-histidine from 5-phospho-alpha-D-ribose 1-diphosphate: step 4/9. The protein is 1-(5-phosphoribosyl)-5-[(5-phosphoribosylamino)methylideneamino] imidazole-4-carboxamide isomerase of Flavobacterium psychrophilum (strain ATCC 49511 / DSM 21280 / CIP 103535 / JIP02/86).